The primary structure comprises 238 residues: Ion-translocating oxidoreductase complex subunit E (238 aa).

A run of 6 helical transmembrane segments spans residues 24 to 44, 52 to 72, 84 to 104, 106 to 126, 141 to 161, and 195 to 215; these read ALWQ…TLAV, LGMG…ISSM, VMIG…NAWM, ELYK…AVLG, ILDG…IGGI, and GILL…LLAA.

The protein belongs to the NqrDE/RnfAE family. As to quaternary structure, the complex is composed of six subunits: RnfA, RnfB, RnfC, RnfD, RnfE and RnfG.

Its subcellular location is the cell inner membrane. In terms of biological role, part of a membrane-bound complex that couples electron transfer with translocation of ions across the membrane. This chain is Ion-translocating oxidoreductase complex subunit E, found in Azotobacter vinelandii (strain DJ / ATCC BAA-1303).